The primary structure comprises 507 residues: DNA ligase B (507 aa).

Residues 1 to 172 (MLLHDVAITS…AAAAGLSGAA (172 aa)) form a not required for adenylyltransferase activity, required for nick joining region. Glutamate 209 serves as a coordination point for ATP. The active-site N6-AMP-lysine intermediate is the lysine 211. ATP contacts are provided by arginine 216, arginine 231, glutamate 260, phenylalanine 300, arginine 372, and lysine 378.

It belongs to the ATP-dependent DNA ligase family. In terms of assembly, monomer. The cofactor is Mg(2+).

The enzyme catalyses ATP + (deoxyribonucleotide)n-3'-hydroxyl + 5'-phospho-(deoxyribonucleotide)m = (deoxyribonucleotide)n+m + AMP + diphosphate.. Its function is as follows. DNA ligase that seals nicks in double-stranded DNA during DNA replication, DNA recombination and DNA repair. The protein is DNA ligase B (ligB) of Mycobacterium tuberculosis (strain ATCC 25618 / H37Rv).